We begin with the raw amino-acid sequence, 127 residues long: Tyrosine-protein phosphatase 2 (127 aa).

Residues 1-127 (QGSKVIVMVT…PRDCEAPILV (127 aa)) form the Tyrosine-protein phosphatase domain. Positions 63-81 (VYDNDDGTEQNDEQTEEEP) are enriched in acidic residues. The tract at residues 63–82 (VYDNDDGTEQNDEQTEEEPE) is disordered.

It belongs to the protein-tyrosine phosphatase family.

The enzyme catalyses O-phospho-L-tyrosyl-[protein] + H2O = L-tyrosyl-[protein] + phosphate. The chain is Tyrosine-protein phosphatase 2 (STY-2) from Styela plicata (Wrinkled sea squirt).